Consider the following 226-residue polypeptide: Urease accessory protein UreF (226 aa).

Belongs to the UreF family. UreD, UreF and UreG form a complex that acts as a GTP-hydrolysis-dependent molecular chaperone, activating the urease apoprotein by helping to assemble the nickel containing metallocenter of UreC. The UreE protein probably delivers the nickel.

The protein localises to the cytoplasm. Required for maturation of urease via the functional incorporation of the urease nickel metallocenter. The sequence is that of Urease accessory protein UreF from Burkholderia ambifaria (strain MC40-6).